The following is a 168-amino-acid chain: MSTQSVSSHNIESSSFSANQHAAEPSVATGGIISEIVYNADQPIVTHLLLPLLQQLGTQSRWLLWLSPQQRLSRPWVQQSGLPLDKMVQLHHINPLFTVDAMERALLTGNYSAVLCWLPHELTEEEKVRLRHAAQAGNTYGFIMRPESAGDDAYRLFPSLKIHSTLYH.

Residues 1–20 (MSTQSVSSHNIESSSFSANQ) are disordered. Residues 105-111 (ALLTGNY) form a ftsZ binding region. Positions 161–168 (KIHSTLYH) are lon protease binding.

It belongs to the SulA family. In terms of assembly, interacts with FtsZ. In terms of processing, is rapidly cleaved and degraded by the Lon protease once DNA damage is repaired.

Functionally, component of the SOS system and an inhibitor of cell division. Accumulation of SulA causes rapid cessation of cell division and the appearance of long, non-septate filaments. In the presence of GTP, binds a polymerization-competent form of FtsZ in a 1:1 ratio, thus inhibiting FtsZ polymerization and therefore preventing it from participating in the assembly of the Z ring. This mechanism prevents the premature segregation of damaged DNA to daughter cells during cell division. The protein is Cell division inhibitor SulA of Pectobacterium atrosepticum (strain SCRI 1043 / ATCC BAA-672) (Erwinia carotovora subsp. atroseptica).